The chain runs to 128 residues: Sulfurtransferase TusD (128 aa).

The active-site Cysteine persulfide intermediate is the C78.

It belongs to the DsrE/TusD family. Heterohexamer, formed by a dimer of trimers. The hexameric TusBCD complex contains 2 copies each of TusB, TusC and TusD. The TusBCD complex interacts with TusE.

It localises to the cytoplasm. In terms of biological role, part of a sulfur-relay system required for 2-thiolation of 5-methylaminomethyl-2-thiouridine (mnm(5)s(2)U) at tRNA wobble positions. Accepts sulfur from TusA and transfers it in turn to TusE. This chain is Sulfurtransferase TusD, found in Escherichia coli O7:K1 (strain IAI39 / ExPEC).